Consider the following 247-residue polypeptide: 5-oxoprolinase subunit A (247 aa).

It belongs to the LamB/PxpA family. In terms of assembly, forms a complex composed of PxpA, PxpB and PxpC.

It catalyses the reaction 5-oxo-L-proline + ATP + 2 H2O = L-glutamate + ADP + phosphate + H(+). Its function is as follows. Catalyzes the cleavage of 5-oxoproline to form L-glutamate coupled to the hydrolysis of ATP to ADP and inorganic phosphate. This chain is 5-oxoprolinase subunit A, found in Klebsiella pneumoniae subsp. pneumoniae (strain ATCC 700721 / MGH 78578).